Consider the following 172-residue polypeptide: RNA silencing suppressor p19 (172 aa).

The span at 1–20 (MERVIQGNDAREQANGERWD) shows a compositional bias: basic and acidic residues. Residues 1-37 (MERVIQGNDAREQANGERWDGGSGGTTSGFKLPDESP) are disordered.

Belongs to the tombusvirus protein p19 family. In terms of assembly, homodimer.

Viral suppressor of RNA silencing which binds specifically to silencing RNAs (siRNAs). Acts as a molecular caliper to specifically select siRNAs based on the length of the duplex region of the RNA. The polypeptide is RNA silencing suppressor p19 (Cynara cardunculus var. scolymus (Globe artichoke)).